The primary structure comprises 185 residues: ATP synthase subunit b 2 (185 aa).

Residues methionine 1 to phenylalanine 25 are disordered. Residues alanine 34 to leucine 56 form a helical membrane-spanning segment.

It belongs to the ATPase B chain family. In terms of assembly, F-type ATPases have 2 components, F(1) - the catalytic core - and F(0) - the membrane proton channel. F(1) has five subunits: alpha(3), beta(3), gamma(1), delta(1), epsilon(1). F(0) has three main subunits: a(1), b(2) and c(10-14). The alpha and beta chains form an alternating ring which encloses part of the gamma chain. F(1) is attached to F(0) by a central stalk formed by the gamma and epsilon chains, while a peripheral stalk is formed by the delta and b chains.

It is found in the cell inner membrane. Functionally, f(1)F(0) ATP synthase produces ATP from ADP in the presence of a proton or sodium gradient. F-type ATPases consist of two structural domains, F(1) containing the extramembraneous catalytic core and F(0) containing the membrane proton channel, linked together by a central stalk and a peripheral stalk. During catalysis, ATP synthesis in the catalytic domain of F(1) is coupled via a rotary mechanism of the central stalk subunits to proton translocation. Component of the F(0) channel, it forms part of the peripheral stalk, linking F(1) to F(0). The b'-subunit is a diverged and duplicated form of b found in plants and photosynthetic bacteria. The polypeptide is ATP synthase subunit b 2 (atpF2) (Nitrobacter winogradskyi (strain ATCC 25391 / DSM 10237 / CIP 104748 / NCIMB 11846 / Nb-255)).